The following is a 269-amino-acid chain: Eukaryotic translation initiation factor 3 subunit G-1 (269 aa).

One can recognise an RRM domain in the interval 188–266 (AAIRISNLSE…LILSVEWSKP (79 aa)).

The protein belongs to the eIF-3 subunit G family. Component of the eukaryotic translation initiation factor 3 (eIF-3) complex. The eIF-3 complex interacts with pix.

Its subcellular location is the cytoplasm. Its function is as follows. RNA-binding component of the eukaryotic translation initiation factor 3 (eIF-3) complex, which is involved in protein synthesis of a specialized repertoire of mRNAs and, together with other initiation factors, stimulates binding of mRNA and methionyl-tRNAi to the 40S ribosome. The eIF-3 complex specifically targets and initiates translation of a subset of mRNAs involved in cell proliferation. This subunit can bind 18S rRNA. In Drosophila virilis (Fruit fly), this protein is Eukaryotic translation initiation factor 3 subunit G-1.